Here is a 201-residue protein sequence, read N- to C-terminus: Recombination protein RecR (201 aa).

The C4-type zinc finger occupies Cys57–Cys72. One can recognise a Toprim domain in the interval Asn80–Ser177.

It belongs to the RecR family.

Functionally, may play a role in DNA repair. It seems to be involved in an RecBC-independent recombinational process of DNA repair. It may act with RecF and RecO. This chain is Recombination protein RecR, found in Brachyspira hyodysenteriae (strain ATCC 49526 / WA1).